The following is a 61-amino-acid chain: Conotoxin Tx-D021 (61 aa).

An N-terminal signal peptide occupies residues 1-22 (MRCLPVFVILLLLIASTPSVDA). Residues 23-48 (RAKTRDDMSLASFHDDAKRILQILQD) constitute a propeptide that is removed on maturation. Residue Cys-60 is modified to Cysteine amide.

This sequence belongs to the conotoxin T superfamily. In terms of processing, contains 2 disulfide bonds that can be either 'C1-C3, C2-C4' or 'C1-C4, C2-C3', since these disulfide connectivities have been observed for conotoxins with cysteine framework V (for examples, see AC P0DQQ7 and AC P81755). Expressed by the venom duct.

Its subcellular location is the secreted. This is Conotoxin Tx-D021 from Conus textile (Cloth-of-gold cone).